Consider the following 449-residue polypeptide: MYHIWIKFLAAWIFLKKFNGVHVMQAKAPMYRNEPFLVFWNAPTTQCRLRYKVDLDLKTFHIVSNANDSLSGSAVTIFYPNHLGVYPHIDDRGHFFHGIIPQNESLTKHLNKSKSDINRIIPLKAFHGLGVIDWENWRPQWDRNWGSKNVYRNRSIQFARDLHPELSEDKIRRLAKKEYEKAAKSFMRDTLLLAEEMRPDGYWGYYLYSDCQNYDYKTKGDQYTGKCPEIEMSRNDQLLWLWRDSTALFPNVYLEIILRSSDNALKFVHHRLKEAMRIASMAREDYALPVFAYARPFYAYTFEPLTQEDLVTTVGETAAMGAAGIVFWGSMQYASTVDSCQKVKKYMNGPLGRYIVNVTTAAKICSRVLCRKNGRCVRKHSDSNAFLHLFPESFRIMVYANATEKKVIVKGKLELENLIYLRENFMCQCYQGWKGLYCEEYSIKDIRKI.

The first 23 residues, 1–23 (MYHIWIKFLAAWIFLKKFNGVHV), serve as a signal peptide directing secretion. Disulfide bonds link cysteine 47/cysteine 340 and cysteine 211/cysteine 227. Residues asparagine 67, asparagine 103, and asparagine 111 are each glycosylated (N-linked (GlcNAc...) asparagine). The active-site Proton donor is the glutamate 135. A glycan (N-linked (GlcNAc...) asparagine) is linked at asparagine 153. N-linked (GlcNAc...) asparagine glycosylation is present at asparagine 357. Disulfide bonds link cysteine 365-cysteine 376, cysteine 370-cysteine 427, and cysteine 429-cysteine 438. Asparagine 401 is a glycosylation site (N-linked (GlcNAc...) asparagine). The region spanning 427 to 438 (CQCYQGWKGLYC) is the EGF-like domain.

It belongs to the glycosyl hydrolase 56 family. In terms of assembly, monomer. Expressed by the venom gland.

It is found in the secreted. It catalyses the reaction Random hydrolysis of (1-&gt;4)-linkages between N-acetyl-beta-D-glucosamine and D-glucuronate residues in hyaluronate.. Functionally, snake venom endo-hyaluronidase that degrades hyaluronan to smaller oligosaccharide fragments. In venom, it is not toxic by itself, but increases the diffusion of other venom proteins by degrading the extracellular matrix. In addition, it displays antiedematogenic activity. This chain is Hyaluronidase-3, found in Cerastes cerastes (Horned desert viper).